The sequence spans 182 residues: MSYVPELKRHYKDNVIKELVSEFQYKSIMQAPKIEKIVVSMGVGDAVKNKKLLDSAISELSQITGQRAVKTKAKKAIAGFKIRQGQDIGAKVTLRGNIMYEFLYKLINLALPRVKDFRGVDGNAFDGNGNYSFGIAEQIIFSEIDYDKIERISGLNVTIVTTALNDKEGKALLSKFGMPFSN.

It belongs to the universal ribosomal protein uL5 family. In terms of assembly, part of the 50S ribosomal subunit; part of the 5S rRNA/L5/L18/L25 subcomplex. Contacts the 5S rRNA and the P site tRNA. Forms a bridge to the 30S subunit in the 70S ribosome.

In terms of biological role, this is one of the proteins that bind and probably mediate the attachment of the 5S RNA into the large ribosomal subunit, where it forms part of the central protuberance. In the 70S ribosome it contacts protein S13 of the 30S subunit (bridge B1b), connecting the 2 subunits; this bridge is implicated in subunit movement. Contacts the P site tRNA; the 5S rRNA and some of its associated proteins might help stabilize positioning of ribosome-bound tRNAs. This Borrelia hermsii (strain HS1 / DAH) protein is Large ribosomal subunit protein uL5.